A 475-amino-acid chain; its full sequence is Trifunctional enzyme subunit beta, mitochondrial (475 aa).

Residues 1-34 (MTTILTCPFKKLPTTSKWALRFAIRPLSCSSQLR) constitute a mitochondrion transit peptide. The residue at position 73 (K73) is an N6-acetyllysine; alternate. K73 carries the N6-succinyllysine; alternate modification. C139 acts as the Acyl-thioester intermediate in catalysis. The stretch at 174–221 (IRHSRKMRKLMLDLNKAKSMGQRLSLISKFRLNFLAPELPAVAEFSTS) is an intramembrane region. The residue at position 189 (K189) is an N6-acetyllysine; alternate. N6-succinyllysine; alternate is present on K189. N6-succinyllysine occurs at positions 191, 273, and 292. K294 is subject to N6-acetyllysine; alternate. An N6-succinyllysine; alternate modification is found at K294. Residue K299 is modified to N6-acetyllysine. At K333 the chain carries N6-acetyllysine; alternate. K333 carries the N6-succinyllysine; alternate modification. N6-acetyllysine is present on residues K349 and K362. The active-site Proton donor/acceptor is C459.

This sequence belongs to the thiolase-like superfamily. Thiolase family. Heterotetramer of 2 alpha/HADHA and 2 beta/HADHB subunits; forms the mitochondrial trifunctional enzyme. Also purified as higher order heterooligomers including a 4 alpha/HADHA and 4 beta/HADHB heterooligomer which physiological significance remains unclear. The mitochondrial trifunctional enzyme interacts with MTLN. Interacts with RSAD2/viperin.

Its subcellular location is the mitochondrion. It is found in the mitochondrion inner membrane. The protein resides in the mitochondrion outer membrane. It localises to the endoplasmic reticulum. It catalyses the reaction an acyl-CoA + acetyl-CoA = a 3-oxoacyl-CoA + CoA. The enzyme catalyses butanoyl-CoA + acetyl-CoA = 3-oxohexanoyl-CoA + CoA. The catalysed reaction is hexanoyl-CoA + acetyl-CoA = 3-oxooctanoyl-CoA + CoA. It carries out the reaction octanoyl-CoA + acetyl-CoA = 3-oxodecanoyl-CoA + CoA. It catalyses the reaction decanoyl-CoA + acetyl-CoA = 3-oxododecanoyl-CoA + CoA. The enzyme catalyses dodecanoyl-CoA + acetyl-CoA = 3-oxotetradecanoyl-CoA + CoA. The catalysed reaction is tetradecanoyl-CoA + acetyl-CoA = 3-oxohexadecanoyl-CoA + CoA. It participates in lipid metabolism; fatty acid beta-oxidation. Its function is as follows. Mitochondrial trifunctional enzyme catalyzes the last three of the four reactions of the mitochondrial beta-oxidation pathway. The mitochondrial beta-oxidation pathway is the major energy-producing process in tissues and is performed through four consecutive reactions breaking down fatty acids into acetyl-CoA. Among the enzymes involved in this pathway, the trifunctional enzyme exhibits specificity for long-chain fatty acids. Mitochondrial trifunctional enzyme is a heterotetrameric complex composed of two proteins, the trifunctional enzyme subunit alpha/HADHA carries the 2,3-enoyl-CoA hydratase and the 3-hydroxyacyl-CoA dehydrogenase activities, while the trifunctional enzyme subunit beta/HADHB described here bears the 3-ketoacyl-CoA thiolase activity. This chain is Trifunctional enzyme subunit beta, mitochondrial (HADHB), found in Macaca fascicularis (Crab-eating macaque).